A 231-amino-acid polypeptide reads, in one-letter code: Probable tetraspanin tspE (231 aa).

The Cytoplasmic segment spans residues 1 to 21 (MTFVDNFEFNQNTPRLVRGPF). Residues 22 to 42 (IILNSIIFSLSFILLCSTGII) form a helical membrane-spanning segment. At 43 to 58 (IYYLNEYYLVKDLTIP) the chain is on the extracellular side. Residues 59–79 (LGSFILSAYMVITTIVGGIAI) form a helical membrane-spanning segment. The Cytoplasmic portion of the chain corresponds to 80 to 83 (WKKK). Residues 84–104 (LGLHLTFMVFLVVLIVCLVGV) traverse the membrane as a helical segment. Residues 105–195 (SAKMIVDSGN…VESILKYLGY (91 aa)) are Extracellular-facing. The helical transmembrane segment at 196 to 216 (YGIVLSVIELILLILSGFFLL) threads the bilayer. Topologically, residues 217-231 (KTNKNVKSKSFILQD) are cytoplasmic.

The protein belongs to the tetraspanin (TM4SF) family.

Its subcellular location is the membrane. This Dictyostelium discoideum (Social amoeba) protein is Probable tetraspanin tspE (tspE).